A 284-amino-acid chain; its full sequence is L-ribulose-5-phosphate 3-epimerase UlaE (284 aa).

The protein belongs to the L-ribulose-5-phosphate 3-epimerase family.

It carries out the reaction L-ribulose 5-phosphate = L-xylulose 5-phosphate. It participates in cofactor degradation; L-ascorbate degradation; D-xylulose 5-phosphate from L-ascorbate: step 3/4. Catalyzes the isomerization of L-xylulose-5-phosphate to L-ribulose-5-phosphate. Is involved in the anaerobic L-ascorbate utilization. This Salmonella paratyphi A (strain AKU_12601) protein is L-ribulose-5-phosphate 3-epimerase UlaE.